The primary structure comprises 405 residues: Palmitoyltransferase PFA3 (405 aa).

At methionine 1–alanine 27 the chain is on the cytoplasmic side. A helical transmembrane segment spans residues threonine 28–valine 48. Residues histidine 49–serine 62 are Lumenal-facing. The helical transmembrane segment at isoleucine 63–tyrosine 83 threads the bilayer. At phenylalanine 84–glutamine 214 the chain is on the cytoplasmic side. Positions arginine 167 to methionine 217 constitute a DHHC domain. Residues phenylalanine 215–tryptophan 235 traverse the membrane as a helical segment. Residues lysine 236–asparagine 251 lie on the Lumenal side of the membrane. A helical transmembrane segment spans residues leucine 252–phenylalanine 272. Topologically, residues serine 273–phenylalanine 405 are cytoplasmic.

The protein belongs to the DHHC palmitoyltransferase family. PFA3 subfamily. Autopalmitoylated.

Its subcellular location is the vacuole membrane. It catalyses the reaction L-cysteinyl-[protein] + hexadecanoyl-CoA = S-hexadecanoyl-L-cysteinyl-[protein] + CoA. In terms of biological role, palmitoyltransferase specific for VAC8. Palmitoylates VAC8 at one or more of its N-terminal cysteine residues, which is required for its proper membrane localization. This Debaryomyces hansenii (strain ATCC 36239 / CBS 767 / BCRC 21394 / JCM 1990 / NBRC 0083 / IGC 2968) (Yeast) protein is Palmitoyltransferase PFA3 (PFA3).